The following is a 118-amino-acid chain: Large ribosomal subunit protein bL19 (118 aa).

The protein belongs to the bacterial ribosomal protein bL19 family.

Its function is as follows. This protein is located at the 30S-50S ribosomal subunit interface and may play a role in the structure and function of the aminoacyl-tRNA binding site. This is Large ribosomal subunit protein bL19 from Citrifermentans bemidjiense (strain ATCC BAA-1014 / DSM 16622 / JCM 12645 / Bem) (Geobacter bemidjiensis).